We begin with the raw amino-acid sequence, 759 residues long: Protein YdeP (759 aa).

[4Fe-4S] cluster contacts are provided by Cys49 and Cys52.

It belongs to the prokaryotic molybdopterin-containing oxidoreductase family. [4Fe-4S] cluster serves as cofactor. It depends on Mo-bis(molybdopterin guanine dinucleotide) as a cofactor.

Probably involved in acid resistance. This chain is Protein YdeP (ydeP), found in Escherichia coli (strain K12).